The primary structure comprises 570 residues: Berberine bridge enzyme-like 19 (570 aa).

The first 30 residues, 1 to 30 (MLTTPPRTFVSVPFFFFFLLFLSLPLSSFS), serve as a signal peptide directing secretion. An intrachain disulfide couples Cys42 to Cys105. An N-linked (GlcNAc...) asparagine glycan is attached at Asn80. The region spanning 83–257 (STLKPTIIIT…LGYKVKLVPV (175 aa)) is the FAD-binding PCMH-type domain. Positions 120-182 (HDYDGLSYIS…RVHGFPAGVC (63 aa)) form a cross-link, 6-(S-cysteinyl)-8alpha-(pros-histidyl)-FAD (His-Cys). Residues Asn341 and Asn359 are each glycosylated (N-linked (GlcNAc...) asparagine).

The protein belongs to the oxygen-dependent FAD-linked oxidoreductase family. It depends on FAD as a cofactor. Post-translationally, the FAD cofactor is bound via a bicovalent 6-S-cysteinyl, 8alpha-N1-histidyl FAD linkage.

The protein localises to the secreted. The protein resides in the cell wall. This is Berberine bridge enzyme-like 19 from Arabidopsis thaliana (Mouse-ear cress).